A 208-amino-acid polypeptide reads, in one-letter code: Small ribosomal subunit protein uS4 (208 aa).

One can recognise an S4 RNA-binding domain in the interval 96–159 (SRLDNIVYRL…KKNEKVLEAL (64 aa)).

The protein belongs to the universal ribosomal protein uS4 family. Part of the 30S ribosomal subunit. Contacts protein S5. The interaction surface between S4 and S5 is involved in control of translational fidelity.

Its function is as follows. One of the primary rRNA binding proteins, it binds directly to 16S rRNA where it nucleates assembly of the body of the 30S subunit. In terms of biological role, with S5 and S12 plays an important role in translational accuracy. The protein is Small ribosomal subunit protein uS4 of Mycoplasma capricolum subsp. capricolum (strain California kid / ATCC 27343 / NCTC 10154).